A 441-amino-acid chain; its full sequence is UDP-N-acetylmuramoylalanine--D-glutamate ligase (441 aa).

129 to 135 (GTNGKST) is an ATP binding site.

It belongs to the MurCDEF family.

The protein resides in the cytoplasm. The catalysed reaction is UDP-N-acetyl-alpha-D-muramoyl-L-alanine + D-glutamate + ATP = UDP-N-acetyl-alpha-D-muramoyl-L-alanyl-D-glutamate + ADP + phosphate + H(+). It functions in the pathway cell wall biogenesis; peptidoglycan biosynthesis. Cell wall formation. Catalyzes the addition of glutamate to the nucleotide precursor UDP-N-acetylmuramoyl-L-alanine (UMA). The sequence is that of UDP-N-acetylmuramoylalanine--D-glutamate ligase from Zymomonas mobilis subsp. mobilis (strain ATCC 31821 / ZM4 / CP4).